We begin with the raw amino-acid sequence, 127 residues long: Major sperm protein 63 (127 aa).

Residue A2 is modified to N-acetylalanine. In terms of domain architecture, MSP spans D9 to N126.

In terms of tissue distribution, sperm.

It is found in the cell projection. The protein localises to the pseudopodium. It localises to the cytoplasm. Its subcellular location is the cytoskeleton. In terms of biological role, central component in molecular interactions underlying sperm crawling. Forms an extensive filament system that extends from sperm villipoda, along the leading edge of the pseudopod. The sequence is that of Major sperm protein 63 (msp-63) from Caenorhabditis elegans.